We begin with the raw amino-acid sequence, 267 residues long: 4-hydroxy-tetrahydrodipicolinate reductase (267 aa).

NAD(+) is bound at residue 11–16; that stretch reads GAAGRM. NADP(+) is bound at residue R39. Residues 100–102 and 126–129 contribute to the NAD(+) site; these read GTT and APNF. H156 functions as the Proton donor/acceptor in the catalytic mechanism. H157 lines the (S)-2,3,4,5-tetrahydrodipicolinate pocket. Catalysis depends on K160, which acts as the Proton donor. 166–167 lines the (S)-2,3,4,5-tetrahydrodipicolinate pocket; the sequence is GT.

This sequence belongs to the DapB family.

Its subcellular location is the cytoplasm. It catalyses the reaction (S)-2,3,4,5-tetrahydrodipicolinate + NAD(+) + H2O = (2S,4S)-4-hydroxy-2,3,4,5-tetrahydrodipicolinate + NADH + H(+). It carries out the reaction (S)-2,3,4,5-tetrahydrodipicolinate + NADP(+) + H2O = (2S,4S)-4-hydroxy-2,3,4,5-tetrahydrodipicolinate + NADPH + H(+). The protein operates within amino-acid biosynthesis; L-lysine biosynthesis via DAP pathway; (S)-tetrahydrodipicolinate from L-aspartate: step 4/4. In terms of biological role, catalyzes the conversion of 4-hydroxy-tetrahydrodipicolinate (HTPA) to tetrahydrodipicolinate. The chain is 4-hydroxy-tetrahydrodipicolinate reductase from Moorella thermoacetica (strain ATCC 39073 / JCM 9320).